The following is a 1000-amino-acid chain: C2 domain-containing protein 5 (1000 aa).

Positions 1–109 (MPGKLKVKIV…EAATVISGWF (109 aa)) constitute a C2 domain. The Ca(2+) site is built by Asp-19, Asp-26, Asp-76, Asp-78, Ser-81, and Asp-84. Residue Ser-197 is modified to Phosphoserine; by PKB/AKT2. 2 positions are modified to phosphoserine: Ser-200 and Ser-260. The interval 265-330 (MKEIPFNEDP…SGSAGKEGGP (66 aa)) is disordered. Residues 274 to 289 (PNPNTHSSGPSTPLKN) show a composition bias toward polar residues. Positions 290-318 (QTYSFSPSKSYSRQSSSSDTDLSLTPKTG) are enriched in low complexity. Phosphoserine occurs at positions 293, 295, 304, 305, and 306. Thr-317 is subject to Phosphothreonine. Positions 319–328 (MGSGSAGKEG) are enriched in gly residues. Position 323 is a phosphoserine (Ser-323). Residue Thr-601 is modified to Phosphothreonine. The segment at 639–669 (EIIGSPIPEPRQRSRLLRSQSESSDEVTELD) is disordered. Residues Ser-643, Ser-657, Ser-659, Ser-661, and Ser-662 each carry the phosphoserine modification. Thr-666 is subject to Phosphothreonine. A Phosphoserine modification is found at Ser-671. Phosphothreonine is present on Thr-807. Phosphoserine is present on residues Ser-817 and Ser-852.

It depends on Ca(2+) as a cofactor. Phosphorylated on Ser-197 by active myristoylated kinase AKT2; insulin-stimulated phosphorylation by AKT2 regulates SLC2A4/GLUT4 translocation into the plasma membrane.

The protein resides in the cytoplasmic vesicle membrane. It localises to the cytoplasm. The protein localises to the cell cortex. It is found in the cell membrane. Its subcellular location is the cell projection. The protein resides in the ruffle. In terms of biological role, required for insulin-stimulated glucose transport and glucose transporter SLC2A4/GLUT4 translocation from intracellular glucose storage vesicle (GSV) to the plasma membrane (PM) in adipocytes. Binds phospholipid membranes in a calcium-dependent manner and is necessary for the optimal membrane fusion between SLC2A4/GLUT4 GSV and the PM. The polypeptide is C2 domain-containing protein 5 (C2CD5) (Pongo abelii (Sumatran orangutan)).